We begin with the raw amino-acid sequence, 123 residues long: Transmembrane protein 80 (123 aa).

The next 4 membrane-spanning stretches (helical) occupy residues 2–22 (LFHLSGLYSALYFLATLLMIV), 35–55 (LALDLVLLLLMGILKVAQLYL), 68–88 (LAASLAFTAVGGLLSVHFLLW), and 102–122 (VLLVLHGLEAGLQVVVIADFI).

The protein resides in the membrane. It localises to the cell projection. It is found in the cilium. This Mus musculus (Mouse) protein is Transmembrane protein 80 (Tmem80).